A 424-amino-acid polypeptide reads, in one-letter code: 3-ketoacyl-CoA thiolase B, peroxisomal (424 aa).

A peroxisome-targeting transit peptide spans 1 to 26 (MHRLQVVLGHLAGRPESSSALQAAPC). Positions 1–26 (MHRLQVVLGHLAGRPESSSALQAAPC) are PTS2-type peroxisomal targeting signal. C123 functions as the Acyl-thioester intermediate in the catalytic mechanism. Residues K173 and K234 each carry the N6-acetyllysine modification. R249, T252, and S276 together coordinate CoA. Residue C408 is the Proton donor/acceptor of the active site.

It belongs to the thiolase-like superfamily. Thiolase family. Homodimer. Interacts (via PTS2-type peroxisomal targeting signal region) with PEX7; leading to its translocation into peroxisomes. In terms of tissue distribution, mainly expressed in liver; weaker levels in kidney, intestine and white adipose tissue.

Its subcellular location is the peroxisome. The enzyme catalyses an acyl-CoA + acetyl-CoA = a 3-oxoacyl-CoA + CoA. It carries out the reaction 2 acetyl-CoA = acetoacetyl-CoA + CoA. The catalysed reaction is hexanoyl-CoA + acetyl-CoA = 3-oxooctanoyl-CoA + CoA. It catalyses the reaction tetradecanoyl-CoA + acetyl-CoA = 3-oxohexadecanoyl-CoA + CoA. The enzyme catalyses 3-oxohexadecanedioyl-CoA + CoA = tetradecanedioyl-CoA + acetyl-CoA. It carries out the reaction 3-oxo-(6Z,9Z,12Z,15Z,18Z,21Z)-tetracosahexaenoyl-CoA + CoA = (4Z,7Z,10Z,13Z,16Z,19Z)-docosahexaenoyl-CoA + acetyl-CoA. It participates in lipid metabolism; peroxisomal fatty acid beta-oxidation. Functionally, responsible for the thiolytic cleavage of straight chain 3-keto fatty acyl-CoAs (3-oxoacyl-CoAs). Plays an important role in fatty acid peroxisomal beta-oxidation. Catalyzes the cleavage of short, medium, long, and very long straight chain 3-oxoacyl-CoAs. The chain is 3-ketoacyl-CoA thiolase B, peroxisomal from Mus musculus (Mouse).